The sequence spans 255 residues: ATP synthase subunit a 2 (255 aa).

5 consecutive transmembrane segments (helical) span residues serine 26–phenylalanine 46, leucine 86–leucine 106, aspartate 131–leucine 151, methionine 205–tryptophan 225, and isoleucine 230–methionine 250.

The protein belongs to the ATPase A chain family. F-type ATPases have 2 components, CF(1) - the catalytic core - and CF(0) - the membrane proton channel. CF(1) has five subunits: alpha(3), beta(3), gamma(1), delta(1), epsilon(1). CF(0) has three main subunits: a(1), b(2) and c(9-12). The alpha and beta chains form an alternating ring which encloses part of the gamma chain. CF(1) is attached to CF(0) by a central stalk formed by the gamma and epsilon chains, while a peripheral stalk is formed by the delta and b chains.

It is found in the cell inner membrane. Key component of the proton channel; it plays a direct role in the translocation of protons across the membrane. The chain is ATP synthase subunit a 2 from Photobacterium profundum (strain SS9).